Consider the following 356-residue polypeptide: S-adenosylmethionine:tRNA ribosyltransferase-isomerase (356 aa).

Belongs to the QueA family. Monomer.

It localises to the cytoplasm. The enzyme catalyses 7-aminomethyl-7-carbaguanosine(34) in tRNA + S-adenosyl-L-methionine = epoxyqueuosine(34) in tRNA + adenine + L-methionine + 2 H(+). The protein operates within tRNA modification; tRNA-queuosine biosynthesis. Functionally, transfers and isomerizes the ribose moiety from AdoMet to the 7-aminomethyl group of 7-deazaguanine (preQ1-tRNA) to give epoxyqueuosine (oQ-tRNA). This chain is S-adenosylmethionine:tRNA ribosyltransferase-isomerase, found in Chromohalobacter salexigens (strain ATCC BAA-138 / DSM 3043 / CIP 106854 / NCIMB 13768 / 1H11).